We begin with the raw amino-acid sequence, 709 residues long: Elongation factor G (709 aa).

Residues 8 to 297 (ANTRNIGIMA…AVIDYLPSPL (290 aa)) enclose the tr-type G domain. Residues 17–24 (AHVDAGKT), 81–85 (DTPGH), and 135–138 (NKMD) contribute to the GTP site.

This sequence belongs to the TRAFAC class translation factor GTPase superfamily. Classic translation factor GTPase family. EF-G/EF-2 subfamily.

Its subcellular location is the cytoplasm. Catalyzes the GTP-dependent ribosomal translocation step during translation elongation. During this step, the ribosome changes from the pre-translocational (PRE) to the post-translocational (POST) state as the newly formed A-site-bound peptidyl-tRNA and P-site-bound deacylated tRNA move to the P and E sites, respectively. Catalyzes the coordinated movement of the two tRNA molecules, the mRNA and conformational changes in the ribosome. This is Elongation factor G from Lactococcus lactis subsp. lactis (strain IL1403) (Streptococcus lactis).